The primary structure comprises 318 residues: Phospholipid scramblase 1 (318 aa).

The segment covering 1–14 has biased composition (polar residues); that stretch reads MDKQNSQMNASHPE. A disordered region spans residues 1–64; the sequence is MDKQNSQMNA…GPGPAGFPVP (64 aa). The proline-rich domain (PRD) stretch occupies residues 1-84; that stretch reads MDKQNSQMNA…NQPVGAAGVP (84 aa). The Cytoplasmic segment spans residues 1–288; the sequence is MDKQNSQMNA…IQFPLDLDVK (288 aa). The SH3-binding 1 motif lies at 18-26; that stretch reads PVGYPPQYP. 2 consecutive short sequence motifs (PPXY motif) follow at residues 22–25 and 33–36; these read PPQY and PPGY. The segment covering 31-44 has biased composition (low complexity); sequence QGPPGYSGYPGPQV. Residues 42–50 carry the SH3-binding 2 motif; that stretch reads PQVSYPPPP. Phosphotyrosine; by ABL is present on residues Y69 and Y74. Positions 84–92 match the SH3-binding 3 motif; that stretch reads PWMPAPQPP. The segment at 99–290 is interaction with hepatitis C virus E2 glycoprotein; that stretch reads LEYLSQIDQI…FPLDLDVKMK (192 aa). T161 is modified (phosphothreonine; by PKC/PRKCD). S-palmitoyl cysteine attachment occurs at residues C184, C185, C186, C188, and C189. The Nuclear localization signal signature appears at 257 to 266; that stretch reads GKISKHWTGI. Residues 289–305 traverse the membrane as a helical segment; it reads MKAVMIGACFLIDFMFF. At 306–318 the chain is on the extracellular side; that stretch reads ESTGSQEQKSGVW.

This sequence belongs to the phospholipid scramblase family. As to quaternary structure, forms homooligomers in the presence of calcium. Interacts with ABL. Interacts with RELT, RELL1 and RELL2. Interacts with OXSR1 in the presence of RELT. Interacts with TOP2A and TOP2B. Interacts with OCLN. Interacts with TRPC5. Interacts with TRPC1 and TRPC4. Interacts with ILDR1. In terms of assembly, (Microbial infection) Interacts with hepatitis C virus E1 and E2 glycoproteins. (Microbial infection) Interacts with T-cell leukemia virus (HTLV)-1 protein Tax (via N-terminus); this interaction represses Tax homodimerization. As to quaternary structure, (Microbial infection) Interacts with HIV-1 protein Tat; this interaction represses the Tat-dependent transactivation of the HIV-1 long terminal repeat (LTR) and reduces the nuclear translocation of Tat. In terms of assembly, (Microbial infection) Interacts with hepatitis B virus protein HBx; this interaction promotes the proteasomal degradation of HBx. (Microbial infection) Interacts with human cytomegalovirus proteins IE1 and IE2. As to quaternary structure, (Microbial infection) Interacts with Epstein Barr virus (EBV) lytic switch protein BZLF1; this interaction negatively regulates the transcriptional regulatory activity of BZLF1 by preventing the formation of the BZLF1-CBP complex. In terms of assembly, (Microbial infection) Interacts with influenza virus nucleoprotein NP. It depends on Ca(2+) as a cofactor. Mg(2+) is required as a cofactor. Zn(2+) serves as cofactor. Phosphorylation at Thr-161 by PKC/PKCD increases its phospholipid scramblase activity during both cell stimulation and apoptosis. Phosphorylated by OXSR1 in the presence of RELT. In terms of processing, palmitoylation is required for its phospholipid scramblase activity. Palmitoylation regulates its localization to the cell membrane or the nucleus; trafficking to the cell membrane is dependent upon palmitoylation whereas in the absence of palmitoylation, localizes to the nucleus. Expressed in platelets, erythrocyte membranes, lymphocytes, spleen, thymus, prostate, testis, uterus, intestine, colon, heart, placenta, lung, liver, kidney and pancreas. Not detected in brain and skeletal muscle.

It is found in the cell membrane. The protein resides in the nucleus. It localises to the cytoplasm. Its subcellular location is the perinuclear region. The enzyme catalyses a 1,2-diacyl-sn-glycero-3-phosphocholine(in) = a 1,2-diacyl-sn-glycero-3-phosphocholine(out). The catalysed reaction is a 1,2-diacyl-sn-glycero-3-phosphoethanolamine(in) = a 1,2-diacyl-sn-glycero-3-phosphoethanolamine(out). It carries out the reaction a 1,2-diacyl-sn-glycero-3-phospho-L-serine(in) = a 1,2-diacyl-sn-glycero-3-phospho-L-serine(out). With respect to regulation, activated by Pb(2+) and Hg(2+) ions. Phosphorylation at Thr-161 by PKC/PKCD increases its phospholipid scramblase activity during both cell stimulation and apoptosis. Functionally, catalyzes calcium-induced ATP-independent rapid bidirectional and non-specific movement of phospholipids (lipid scrambling or lipid flip-flop) between the inner and outer leaflet of the plasma membrane resulting in collapse of the phospholipid asymmetry which leads to phosphatidylserine externalization on the cell surface. Mediates calcium-dependent phosphatidylserine externalization and apoptosis in neurons via its association with TRPC5. Also exhibits magnesium-dependent nuclease activity against double-stranded DNA and RNA but not single-stranded DNA and can enhance DNA decatenation mediated by TOP2A. Negatively regulates FcR-mediated phagocytosis in differentiated macrophages. May contribute to cytokine-regulated cell proliferation and differentiation. May play a role in the antiviral response of interferon (IFN) by amplifying and enhancing the IFN response through increased expression of select subset of potent antiviral genes. Inhibits the functions of viral transactivators, including human T-cell leukemia virus (HTLV)-1 protein Tax, human immunodeficiency virus (HIV)-1 Tat, human hepatitis B virus (HBV) HBx, Epstein-Barr virus (EBV) BZLF1 and human cytomegalovirus IE1 and IE2 proteins through direct interactions. Also mediates the inhibition of influenza virus infection by preventing nuclear import of the viral nucleoprotein/NP. Plays a crucial role as a defense factor against SARS-CoV-2 independently of its scramblase activity by directly targeting nascent viral vesicles to prevent virus-membrane fusion and the release of viral RNA into the host-cell cytosol. In terms of biological role, (Microbial infection) Acts as an attachment receptor for HCV. The protein is Phospholipid scramblase 1 (PLSCR1) of Homo sapiens (Human).